The primary structure comprises 1539 residues: Lysine-specific demethylase 5D (1539 aa).

The JmjN domain occupies 14–55; sequence CPVFEPSWAEFQDPLGYIAKIRPIAEKSGICKIRPPADWQPP. Residues 79–169 form the ARID domain; the sequence is TRVKLNYLDQ…IIYPYEMFQS (91 aa). A disordered region spans residues 192–228; the sequence is PHSIPLRQSVQPSKFSSYSRRAKRLQPDPEPTEEDIE. Positions 197-210 are enriched in polar residues; it reads LRQSVQPSKFSSYS. Residues K205, K229, K244, and K272 each participate in a glycyl lysine isopeptide (Lys-Gly) (interchain with G-Cter in SUMO2) cross-link. A phosphoserine mark is found at S291 and S307. Residues 316 to 362 form a PHD-type 1 zinc finger; sequence ICQVCSRGDEDDKLLFCDGCDDNYHIFCLLPPLPEIPRGIWRCPKCI. 2-oxoglutarate is bound at residue Y430. One can recognise a JmjC domain in the interval 458–624; the sequence is EYATSGWNLN…AGRQCIEHYR (167 aa). H504 and E506 together coordinate Fe cation. S512, N514, and K522 together coordinate 2-oxoglutarate. H592 contributes to the Fe cation binding site. The segment at 697 to 749 adopts a C5HC2 zinc-finger fold; it reads CIKCKTTCFLSALACYDCPDGLVCLSHINDLCKCSSSRQYLRYRYTLDELPTM. S884 is subject to Phosphoserine. Residues 1174–1235 form a PHD-type 2 zinc finger; the sequence is ICVCGQVPAG…DTKFLCPLCM (62 aa). The residue at position 1346 (S1346) is a Phosphoserine. Residues 1429 to 1521 form a disordered region; the sequence is HQGSRTRSRA…QHKDSGSSAA (93 aa). The segment covering 1432–1446 has biased composition (basic residues); that stretch reads SRTRSRALERRRRRQ. Over residues 1477–1491 the composition is skewed to basic and acidic residues; the sequence is GREEEHYQEKADREN. Residues 1494-1521 are compositionally biased toward polar residues; sequence LTPSTDHSPFLKGNQNSLQHKDSGSSAA.

Belongs to the JARID1 histone demethylase family. In terms of assembly, interacts with PCGF6, MSH5, ZMYND8, AR. L-ascorbate is required as a cofactor. It depends on Fe(2+) as a cofactor. Expression is highly down-regulated in metastatic prostate tumors.

It is found in the nucleus. It carries out the reaction N(6),N(6),N(6)-trimethyl-L-lysyl(4)-[histone H3] + 3 2-oxoglutarate + 3 O2 = L-lysyl(4)-[histone H3] + 3 formaldehyde + 3 succinate + 3 CO2. Histone demethylase that specifically demethylates 'Lys-4' of histone H3, thereby playing a central role in histone code. Does not demethylate histone H3 'Lys-9', H3 'Lys-27', H3 'Lys-36', H3 'Lys-79' or H4 'Lys-20'. Demethylates trimethylated and dimethylated but not monomethylated H3 'Lys-4'. May play a role in spermatogenesis. Involved in transcriptional repression of diverse metastasis-associated genes; in this function seems to cooperate with ZMYND8. Suppresses prostate cancer cell invasion. Regulates androgen receptor (AR) transcriptional activity by demethylating H3K4me3 active transcription marks. The protein is Lysine-specific demethylase 5D (KDM5D) of Homo sapiens (Human).